The primary structure comprises 84 residues: U-scoloptoxin(10)-Er1a (84 aa).

The N-terminal stretch at 1-24 (MSRFCLLFVAFGFVLYFLHMEVTG) is a signal peptide.

This sequence belongs to the scoloptoxin-10 family. Contains 3 disulfide bonds. In terms of tissue distribution, expressed by the venom gland.

It localises to the secreted. The protein is U-scoloptoxin(10)-Er1a of Ethmostigmus rubripes (Giant centipede).